A 326-amino-acid chain; its full sequence is Probable fructokinase-4 (326 aa).

It belongs to the carbohydrate kinase PfkB family.

It carries out the reaction D-fructose + ATP = D-fructose 6-phosphate + ADP + H(+). Its pathway is glycan biosynthesis; starch biosynthesis. Its function is as follows. May play an important role in maintaining the flux of carbon towards starch formation. The protein is Probable fructokinase-4 of Arabidopsis thaliana (Mouse-ear cress).